The sequence spans 376 residues: Transcription factor TEOSINTE BRANCHED 1 (376 aa).

The TCP domain maps to 114-172 (RKDRHSKICTAGGMRDRRMRLSLDVARKFFALQDMLGFDKASKTVQWLLNTSKSAIQEI). Disordered stretches follow at residues 179-266 (SECV…KHRM) and 280-299 (AAAS…HHSS). 2 stretches are compositionally biased toward basic and acidic residues: residues 207-219 (QKPK…EGKK) and 243-261 (VPDK…ERTK). Residues 246–263 (KETRAKARERARERTKEK) form the R domain. The segment covering 290–299 (SSNNLSHHSS) has biased composition (low complexity).

In terms of tissue distribution, expressed in axillary inflorescence primordia, immature internodes below these primordia, and immature husk surrounding these primordia.

The protein localises to the nucleus. Its function is as follows. Transcription factor. Involved in apical dominance. Represses the growth of axillary organs (e.g. lateral branches), but enables the formation of female inflorescences. Regulates the number and length of axillary branches. This Zea mays (Maize) protein is Transcription factor TEOSINTE BRANCHED 1 (TB1).